Here is a 387-residue protein sequence, read N- to C-terminus: UDP-N-acetylglucosamine--N-acetylmuramyl-(pentapeptide) pyrophosphoryl-undecaprenol N-acetylglucosamine transferase (387 aa).

Residues 1–22 (MSEHVRSAGPPQASTAPSGGSA) form a disordered region. UDP-N-acetyl-alpha-D-glucosamine contacts are provided by residues 41 to 43 (TGG), Asn158, Arg194, Ser222, Ile276, and Gln321.

The protein belongs to the glycosyltransferase 28 family. MurG subfamily.

It is found in the cell inner membrane. It carries out the reaction di-trans,octa-cis-undecaprenyl diphospho-N-acetyl-alpha-D-muramoyl-L-alanyl-D-glutamyl-meso-2,6-diaminopimeloyl-D-alanyl-D-alanine + UDP-N-acetyl-alpha-D-glucosamine = di-trans,octa-cis-undecaprenyl diphospho-[N-acetyl-alpha-D-glucosaminyl-(1-&gt;4)]-N-acetyl-alpha-D-muramoyl-L-alanyl-D-glutamyl-meso-2,6-diaminopimeloyl-D-alanyl-D-alanine + UDP + H(+). It functions in the pathway cell wall biogenesis; peptidoglycan biosynthesis. Functionally, cell wall formation. Catalyzes the transfer of a GlcNAc subunit on undecaprenyl-pyrophosphoryl-MurNAc-pentapeptide (lipid intermediate I) to form undecaprenyl-pyrophosphoryl-MurNAc-(pentapeptide)GlcNAc (lipid intermediate II). This Polaromonas sp. (strain JS666 / ATCC BAA-500) protein is UDP-N-acetylglucosamine--N-acetylmuramyl-(pentapeptide) pyrophosphoryl-undecaprenol N-acetylglucosamine transferase.